We begin with the raw amino-acid sequence, 438 residues long: Putative B3 domain-containing protein Os04g0676650 (438 aa).

Over residues 1–11 (MADARGSSSSS) the composition is skewed to low complexity. 2 disordered regions span residues 1–30 (MADA…DFVG) and 225–285 (SSSH…MNQN). Positions 12–30 (GDGGGGEGKGGAGHGDFVG) are enriched in gly residues. Residues 258-269 (RRSDMESEKNDD) show a composition bias toward basic and acidic residues. A compositionally biased stretch (polar residues) spans 272 to 285 (DQTPVSEPPSMNQN). Residues 302 to 404 (LRKELTNSDV…KFVVRGEKAI (103 aa)) constitute a DNA-binding region (TF-B3).

Its subcellular location is the nucleus. The polypeptide is Putative B3 domain-containing protein Os04g0676650 (Oryza sativa subsp. japonica (Rice)).